Here is a 756-residue protein sequence, read N- to C-terminus: Serine/threonine-protein kinase DCLK2 (756 aa).

A disordered region spans residues 1-44 (MASTRSIELEHFEERDKRPRPGSRRGAPSSSGGSSISGPKGNGL). Basic and acidic residues predominate over residues 7–19 (IELEHFEERDKRP). Over residues 24–43 (RRGAPSSSGGSSISGPKGNG) the composition is skewed to low complexity. Thr61 carries the post-translational modification Phosphothreonine. Doublecortin domains are found at residues 72–158 (KKAR…VDYT) and 196–279 (KLVT…AQDD). Low complexity-rich tracts occupy residues 301–311 (KYSGSRSPGFS) and 323–346 (TPSS…SPGS). The tract at residues 301 to 375 (KYSGSRSPGF…GPELDRCLSP (75 aa)) is disordered. The span at 353-364 (ISAQGRSSSNVN) shows a compositional bias: polar residues. At Ser361 the chain carries Phosphoserine. In terms of domain architecture, Protein kinase spans 393 to 650 (YRIGKVIGDG…AGEILSHPWV (258 aa)). Residues 399–407 (IGDGNFAVV) and Lys422 each bind ATP. Asp514 (proton acceptor) is an active-site residue. Ser646 carries the phosphoserine modification. The residue at position 665 (Thr665) is a Phosphothreonine. The disordered stretch occupies residues 707 to 756 (QDSSRPSREQTSPVPPSAQEAPPPLESPRPPGPPATSGCDLAGTWRRHRD). Positions 719–740 (PVPPSAQEAPPPLESPRPPGPP) are enriched in pro residues.

It belongs to the protein kinase superfamily. CAMK Ser/Thr protein kinase family. CaMK subfamily. As to quaternary structure, binds to and stabilizes microtubules. Interacts with MAPK8IP1/JIP-1, MAPK8IP2/JIP-2, MAPK9/JNK2, PPP1R9B/NEURABIN-2 and actin. Post-translationally, autophosphorylated. In terms of tissue distribution, expressed in the central and peripheral nervous system including the brain, spinal cord, cranial and dorsal root ganglia and in the parasympathetic ganglia. Present in neurons, but not in glial cells, in most forebrain areas. Strong expression in the hippocampal CA1 pyramidal cell layer. Expressed in the photoreceptor sensory cilium complex and in eyes. Also detected in individual cells of the olfactory epithelium.

Its subcellular location is the cytoplasm. The protein resides in the cytoskeleton. It carries out the reaction L-seryl-[protein] + ATP = O-phospho-L-seryl-[protein] + ADP + H(+). It catalyses the reaction L-threonyl-[protein] + ATP = O-phospho-L-threonyl-[protein] + ADP + H(+). Functionally, protein kinase with a significantly reduced Ca(2+)+/CAM affinity and dependence compared to other members of the CaMK family. May play a role in the down-regulation of CRE-dependent gene activation probably by phosphorylation of the CREB coactivator CRTC2/TORC2 and the resulting retention of TORC2 in the cytoplasm. In Mus musculus (Mouse), this protein is Serine/threonine-protein kinase DCLK2 (Dclk2).